Consider the following 268-residue polypeptide: Aliphatic sulfonates import ATP-binding protein SsuB 3 (268 aa).

The interval 1–27 (MTAAEAPLPPLAPRERTATTAAERRTG) is disordered. The span at 13–26 (PRERTATTAAERRT) shows a compositional bias: basic and acidic residues. Residues 32 to 247 (VSLSGVRKSF…DRNDPEALRY (216 aa)) form the ABC transporter domain. 64–71 (GPSGTGKT) provides a ligand contact to ATP.

This sequence belongs to the ABC transporter superfamily. Aliphatic sulfonates importer (TC 3.A.1.17.2) family. The complex is composed of two ATP-binding proteins (SsuB), two transmembrane proteins (SsuC) and a solute-binding protein (SsuA).

The protein localises to the cell membrane. It carries out the reaction ATP + H2O + aliphatic sulfonate-[sulfonate-binding protein]Side 1 = ADP + phosphate + aliphatic sulfonateSide 2 + [sulfonate-binding protein]Side 1.. Part of the ABC transporter complex SsuABC involved in aliphatic sulfonates import. Responsible for energy coupling to the transport system. The protein is Aliphatic sulfonates import ATP-binding protein SsuB 3 of Rhodococcus jostii (strain RHA1).